The sequence spans 310 residues: Ribosomal RNA small subunit methyltransferase H (310 aa).

S-adenosyl-L-methionine-binding positions include 32–34 (AGH), aspartate 51, phenylalanine 78, aspartate 99, and glutamine 106.

This sequence belongs to the methyltransferase superfamily. RsmH family.

The protein resides in the cytoplasm. The catalysed reaction is cytidine(1402) in 16S rRNA + S-adenosyl-L-methionine = N(4)-methylcytidine(1402) in 16S rRNA + S-adenosyl-L-homocysteine + H(+). Functionally, specifically methylates the N4 position of cytidine in position 1402 (C1402) of 16S rRNA. This Macrococcus caseolyticus (strain JCSC5402) (Macrococcoides caseolyticum) protein is Ribosomal RNA small subunit methyltransferase H.